The sequence spans 506 residues: Putative transporter SVOPL (506 aa).

10 helical membrane passes run 57–77, 104–124, 133–153, 190–210, 220–240, 297–317, 362–382, 397–417, 444–464, and 472–492; these read SIGF…ANIV, ALVS…CGYI, VVFG…FSTS, LLPL…VLGM, WMIR…MFIP, TSLL…GSVL, LISC…LNIV, FFFM…LLFL, IGMG…PFIA, and VILA…GVFF.

Belongs to the major facilitator superfamily.

The protein localises to the membrane. This is Putative transporter SVOPL (svopl) from Danio rerio (Zebrafish).